A 1058-amino-acid chain; its full sequence is Carbamoyl phosphate synthase large chain (1058 aa).

The tract at residues 1-401 (MSKRKDIQKI…SLLKACRSLE (401 aa)) is carboxyphosphate synthetic domain. R129, R169, G175, G176, R208, I210, E215, G241, I242, H243, Q284, and E298 together coordinate ATP. An ATP-grasp 1 domain is found at 133–327 (KQLMQELDQP…IAKLAAKIAV (195 aa)). Residues Q284, E298, and N300 each coordinate Mg(2+). Mn(2+) contacts are provided by Q284, E298, and N300. An oligomerization domain region spans residues 402-546 (IGVCHNEMTS…YSTYELENES (145 aa)). The tract at residues 547–929 (VQSNKESILV…ALYKAFEANN (383 aa)) is carbamoyl phosphate synthetic domain. The 191-residue stretch at 671–861 (EKALKELGIP…MAQIATKLIL (191 aa)) folds into the ATP-grasp 2 domain. Positions 707, 746, 748, 752, 777, 778, 779, 780, 820, and 832 each coordinate ATP. The Mg(2+) site is built by Q820, E832, and N834. Q820, E832, and N834 together coordinate Mn(2+). The 129-residue stretch at 930-1058 (SHLSEFGQIV…ESRCFNIEAI (129 aa)) folds into the MGS-like domain. The tract at residues 930 to 1058 (SHLSEFGQIV…ESRCFNIEAI (129 aa)) is allosteric domain.

This sequence belongs to the CarB family. As to quaternary structure, composed of two chains; the small (or glutamine) chain promotes the hydrolysis of glutamine to ammonia, which is used by the large (or ammonia) chain to synthesize carbamoyl phosphate. Tetramer of heterodimers (alpha,beta)4. Mg(2+) serves as cofactor. Requires Mn(2+) as cofactor.

The catalysed reaction is hydrogencarbonate + L-glutamine + 2 ATP + H2O = carbamoyl phosphate + L-glutamate + 2 ADP + phosphate + 2 H(+). It carries out the reaction hydrogencarbonate + NH4(+) + 2 ATP = carbamoyl phosphate + 2 ADP + phosphate + 2 H(+). Its pathway is amino-acid biosynthesis; L-arginine biosynthesis; carbamoyl phosphate from bicarbonate: step 1/1. It functions in the pathway pyrimidine metabolism; UMP biosynthesis via de novo pathway; (S)-dihydroorotate from bicarbonate: step 1/3. Functionally, large subunit of the glutamine-dependent carbamoyl phosphate synthetase (CPSase). CPSase catalyzes the formation of carbamoyl phosphate from the ammonia moiety of glutamine, carbonate, and phosphate donated by ATP, constituting the first step of 2 biosynthetic pathways, one leading to arginine and/or urea and the other to pyrimidine nucleotides. The large subunit (synthetase) binds the substrates ammonia (free or transferred from glutamine from the small subunit), hydrogencarbonate and ATP and carries out an ATP-coupled ligase reaction, activating hydrogencarbonate by forming carboxy phosphate which reacts with ammonia to form carbamoyl phosphate. This is Carbamoyl phosphate synthase large chain from Streptococcus pyogenes serotype M5 (strain Manfredo).